Reading from the N-terminus, the 2621-residue chain is Nonribosomal peptide synthetase dtpA (2621 aa).

Residues 446 to 844 are adenylation 1; the sequence is CMEQPNAEAI…GRKDQQVKIR (399 aa). The Carrier 1 domain maps to 978–1054; the sequence is QPYTQVEETL…EVALYSRALS (77 aa). An O-(pantetheine 4'-phosphoryl)serine modification is found at serine 1015. The interval 1095-1506 is condensation 1; it reads EDIYPCTALQ…LNQLELAGPQ (412 aa). Residues 1534-1930 form an adenylation 2 region; the sequence is SRTQPGASAI…GRRDNQVKLR (397 aa). A Carrier 2 domain is found at 2071–2147; that stretch reads QPSTTQEALV…LFCTNASTSI (77 aa). Residue serine 2108 is modified to O-(pantetheine 4'-phosphoryl)serine. Residues 2220–2618 are condensation 2; sequence AIFKLHGSKV…HSARPIASID (399 aa).

This sequence belongs to the NRP synthetase family.

The protein operates within alkaloid biosynthesis. Nonribosomal peptide synthetase; part of the gene cluster that mediates the biosynthesis of the dimeric diketopiperazine alkaloid ditryptophenaline. The nonribosomal peptide synthase dtpA accepts L-tryptophan and L-phenylalanine as its substrates and forms the phenylalanyl-tryptophanyl cyclic dipeptide product cyclophenylalanyltryptophenyl. The N-methyltransferase dtpB is responsible for the N-methylation of cyclophenylalanyltryptophenyl to yield cyclo-N-methylphenylalanyltryptophenyl. The cytochrome P450 monooxygenase is responsible not only for pyrroloindole ring formation but also for concurrent dimerization of N-methylphenylalanyltryptophanyl diketopiperazine monomers into a homodimeric product. This chain is Nonribosomal peptide synthetase dtpA, found in Aspergillus flavus (strain ATCC 200026 / FGSC A1120 / IAM 13836 / NRRL 3357 / JCM 12722 / SRRC 167).